The following is a 669-amino-acid chain: Cysteine-rich receptor-like protein kinase 34 (669 aa).

Positions 1 to 23 (MKLKISFLPTFLIFLISLDSVTA) are cleaved as a signal peptide. 2 Gnk2-homologous domains span residues 24–123 (QEIC…NVSF) and 133–246 (ETLY…LYPY). The Extracellular portion of the chain corresponds to 24–285 (QEICFSGFFK…SDRANTTIKG (262 aa)). Residues N35, N52, N103, N120, N147, N172, N252, and N280 are each glycosylated (N-linked (GlcNAc...) asparagine). The chain crosses the membrane as a helical span at residues 286–306 (IIVAIVVPIIVILVSLVVLLV). The Cytoplasmic segment spans residues 307–669 (VCRRKKSYKT…DASITEFYPR (363 aa)). Residues 345-624 (FSDSNMIGRG…MMLTSSTTTL (280 aa)) form the Protein kinase domain. ATP contacts are provided by residues 351-359 (IGRGGFGEV) and K373. Phosphotyrosine is present on Y418. D470 acts as the Proton acceptor in catalysis. The residue at position 474 (S474) is a Phosphoserine. At T510 the chain carries Phosphothreonine. At Y518 the chain carries Phosphotyrosine.

The protein belongs to the protein kinase superfamily. Ser/Thr protein kinase family. CRK subfamily.

Its subcellular location is the membrane. The enzyme catalyses L-seryl-[protein] + ATP = O-phospho-L-seryl-[protein] + ADP + H(+). It catalyses the reaction L-threonyl-[protein] + ATP = O-phospho-L-threonyl-[protein] + ADP + H(+). The protein is Cysteine-rich receptor-like protein kinase 34 of Arabidopsis thaliana (Mouse-ear cress).